A 758-amino-acid chain; its full sequence is Vitamin K-dependent gamma-carboxylase (758 aa).

The segment at 1–34 (MAVSARPARAPRGSDKVKKDKAAQTSGPRQGSRM) is disordered. Ala-2 is modified (N-acetylalanine). Residues 2-60 (AVSARPARAPRGSDKVKKDKAAQTSGPRQGSRMGKLLGFEWTDVSSWERLVTLLNRPTD) lie on the Cytoplasmic side of the membrane. A compositionally biased stretch (basic and acidic residues) spans 12–22 (RGSDKVKKDKA). The chain crosses the membrane as a helical span at residues 61–81 (PAGLAVFRFLFGLMMVLDIPQ). Topologically, residues 82 to 113 (ERGLSSLDRRYLDGLEVCRFPLLDALQPLPLD) are lumenal. Cys-99 and Cys-450 form a disulfide bridge. A helical transmembrane segment spans residues 114–134 (WMYLIYTIMFLGALGMMLGLC). The Cytoplasmic portion of the chain corresponds to 135–136 (YR). The helical transmembrane segment at 137 to 157 (ISCVLFLLPYWYVFLLDKTSW) threads the bilayer. The Lumenal segment spans residues 158–292 (NNHSYLYGLL…VSYFHCMNSQ (135 aa)). Residues 293-313 (LFSIGMFPYVMLASSPLFCSP) form a helical membrane-spanning segment. The Cytoplasmic portion of the chain corresponds to 314-363 (EWPRKLVAHCPKKLQELLPLRTAPQPSTSCMYKRSRARGSQKPGLRHKLS). The helical transmembrane segment at 364-384 (TAFTLLYLLEQLFLPYSHFLT) threads the bilayer. The Lumenal segment spans residues 385–758 (QGYNNWTNGL…PDSHPVHSEF (374 aa)). Positions 727 to 758 (PFEPAGEPSPVNTDSSNPNPPEPDSHPVHSEF) are disordered. Basic and acidic residues predominate over residues 749–758 (PDSHPVHSEF).

As to quaternary structure, monomer. May interact with CALU. In terms of processing, the N-terminus is blocked.

It is found in the endoplasmic reticulum membrane. It catalyses the reaction 4-carboxy-L-glutamyl-[protein] + 2,3-epoxyphylloquinone + H2O + H(+) = phylloquinol + L-glutamyl-[protein] + CO2 + O2. Functionally, mediates the vitamin K-dependent carboxylation of glutamate residues to calcium-binding gamma-carboxyglutamate (Gla) residues with the concomitant conversion of the reduced hydroquinone form of vitamin K to vitamin K epoxide. Catalyzes gamma-carboxylation of various proteins, such as blood coagulation factors (F2, F7, F9 and F10), osteocalcin (BGLAP) or matrix Gla protein (MGP). The protein is Vitamin K-dependent gamma-carboxylase (GGCX) of Bos taurus (Bovine).